The chain runs to 563 residues: Adenine deaminase (563 aa).

This sequence belongs to the metallo-dependent hydrolases superfamily. Adenine deaminase family. Requires Mn(2+) as cofactor.

It catalyses the reaction adenine + H2O + H(+) = hypoxanthine + NH4(+). This is Adenine deaminase from Lactiplantibacillus plantarum (strain ATCC BAA-793 / NCIMB 8826 / WCFS1) (Lactobacillus plantarum).